The primary structure comprises 166 residues: Large ribosomal subunit protein mL49 (166 aa).

The protein belongs to the mitochondrion-specific ribosomal protein mL49 family. As to quaternary structure, component of the mitochondrial ribosome large subunit (39S) which comprises a 16S rRNA and about 50 distinct proteins. Interacts with OXA1L.

Its subcellular location is the mitochondrion. The protein is Large ribosomal subunit protein mL49 (MRPL49) of Bos taurus (Bovine).